We begin with the raw amino-acid sequence, 370 residues long: 3-isopropylmalate dehydrogenase (370 aa).

77–90 provides a ligand contact to NAD(+); the sequence is GPKWDSVPYEVRPE. The substrate site is built by Arg-97, Arg-107, Arg-135, and Asp-226. Residues Asp-226, Asp-250, and Asp-254 each contribute to the Mg(2+) site. NAD(+) is bound at residue 290–302; sequence GSAPDIAGKGIAN.

This sequence belongs to the isocitrate and isopropylmalate dehydrogenases family. LeuB type 1 subfamily. Homodimer. Requires Mg(2+) as cofactor. Mn(2+) serves as cofactor.

It localises to the cytoplasm. It catalyses the reaction (2R,3S)-3-isopropylmalate + NAD(+) = 4-methyl-2-oxopentanoate + CO2 + NADH. It participates in amino-acid biosynthesis; L-leucine biosynthesis; L-leucine from 3-methyl-2-oxobutanoate: step 3/4. Functionally, catalyzes the oxidation of 3-carboxy-2-hydroxy-4-methylpentanoate (3-isopropylmalate) to 3-carboxy-4-methyl-2-oxopentanoate. The product decarboxylates to 4-methyl-2 oxopentanoate. In Rhizobium etli (strain ATCC 51251 / DSM 11541 / JCM 21823 / NBRC 15573 / CFN 42), this protein is 3-isopropylmalate dehydrogenase.